Consider the following 556-residue polypeptide: Oxygen-dependent choline dehydrogenase (556 aa).

An FAD-binding site is contributed by 4–33 (DYIIIGAGSAGNVLATRLTEDPNTTVLLLE). The active-site Proton acceptor is the His-473.

Belongs to the GMC oxidoreductase family. FAD is required as a cofactor.

It localises to the cell membrane. The enzyme catalyses choline + A = betaine aldehyde + AH2. It catalyses the reaction betaine aldehyde + NAD(+) + H2O = glycine betaine + NADH + 2 H(+). Its pathway is amine and polyamine biosynthesis; betaine biosynthesis via choline pathway; betaine aldehyde from choline (cytochrome c reductase route): step 1/1. Involved in the biosynthesis of the osmoprotectant glycine betaine. Catalyzes the oxidation of choline to betaine aldehyde and betaine aldehyde to glycine betaine at the same rate. The chain is Oxygen-dependent choline dehydrogenase from Escherichia coli O6:H1 (strain CFT073 / ATCC 700928 / UPEC).